Reading from the N-terminus, the 115-residue chain is Dolichyl-diphosphooligosaccharide--protein glycosyltransferase subunit DAD2 (115 aa).

The Cytoplasmic portion of the chain corresponds to 1-31 (MVKSTSKDAQDLFHSLHSAYTATPTNLKIID). The helical transmembrane segment at 32–52 (LYVCFAVFTALIQVAYMALVG) threads the bilayer. Over 53-55 (SFP) the chain is Lumenal. The helical transmembrane segment at 56–76 (FNSFLSGVLSCIGTAVLAVCL) threads the bilayer. The Cytoplasmic portion of the chain corresponds to 77–94 (RIQVNKENKEFKDLAPER). Residues 95–115 (AFADFVLCNLVLHLVIINFLG) traverse the membrane as a helical segment.

Belongs to the DAD/OST2 family. Component of the oligosaccharyltransferase (OST) complex.

The protein resides in the endoplasmic reticulum membrane. Its pathway is protein modification; protein glycosylation. Functionally, subunit of the oligosaccharyl transferase (OST) complex that catalyzes the initial transfer of a defined glycan (Glc(3)Man(9)GlcNAc(2) in eukaryotes) from the lipid carrier dolichol-pyrophosphate to an asparagine residue within an Asn-X-Ser/Thr consensus motif in nascent polypeptide chains, the first step in protein N-glycosylation. N-glycosylation occurs cotranslationally and the complex associates with the Sec61 complex at the channel-forming translocon complex that mediates protein translocation across the endoplasmic reticulum (ER). All subunits are required for a maximal enzyme activity. The chain is Dolichyl-diphosphooligosaccharide--protein glycosyltransferase subunit DAD2 (DAD2) from Arabidopsis thaliana (Mouse-ear cress).